The primary structure comprises 563 residues: F-box/kelch-repeat protein At5g42350 (563 aa).

One can recognise an F-box domain in the interval 129–175 (YRKHVYLPDDILEMCLMRLPLTSLLNAHLVCKKWQSMANTQRFLQMR). Kelch repeat units lie at residues 184-231 (WLFL…SIHE), 232-282 (EIYI…ATEV), and 355-402 (VLIA…IICN).

The chain is F-box/kelch-repeat protein At5g42350 from Arabidopsis thaliana (Mouse-ear cress).